Consider the following 173-residue polypeptide: Shikimate kinase 1 (173 aa).

An ATP-binding site is contributed by 14-19; sequence GAGKST. Position 18 (S18) interacts with Mg(2+). Positions 36, 60, and 82 each coordinate substrate. Residue R120 coordinates ATP. Substrate is bound at residue R140. Q157 contributes to the ATP binding site.

It belongs to the shikimate kinase family. Monomer. Mg(2+) is required as a cofactor.

It localises to the cytoplasm. The catalysed reaction is shikimate + ATP = 3-phosphoshikimate + ADP + H(+). The protein operates within metabolic intermediate biosynthesis; chorismate biosynthesis; chorismate from D-erythrose 4-phosphate and phosphoenolpyruvate: step 5/7. Functionally, catalyzes the specific phosphorylation of the 3-hydroxyl group of shikimic acid using ATP as a cosubstrate. The protein is Shikimate kinase 1 of Sodalis glossinidius (strain morsitans).